A 473-amino-acid polypeptide reads, in one-letter code: Myocyte-specific enhancer factor 2C (473 aa).

Positions 3-57 (RKKIQITRIMDERNRQVTFTKRKFGLMKKAYELSVLCDCEIALIIFNSTNKLFQY) constitute an MADS-box domain. Lys-4 is modified (N6-acetyllysine). Residues 58 to 86 (ASTDMDKVLLKYTEYNEPHESRTNSDIVE) constitute a DNA-binding region (mef2-type). Ser-59 carries the post-translational modification Phosphoserine; by CK2. The interval 91–116 (KGLNGCDSPDPDADDSVGHSPESEDK) is disordered. Phosphoserine is present on residues Ser-98, Ser-106, and Ser-110. N6-acetyllysine is present on residues Lys-116 and Lys-119. Residues 180–224 (NSMSPGVTHRPPSAGNTGGLMGGDLTSGAGTSAGNGYGNPRNSPG) are disordered. Ser-222 and Ser-228 each carry phosphoserine. Residues Lys-234 and Lys-239 each carry the N6-acetyllysine modification. Ser-240 is modified (phosphoserine). N6-acetyllysine occurs at positions 252 and 264. The tract at residues 271–278 (SEDVDLLL) is beta domain. Phosphothreonine; by MAPK14 occurs at positions 293 and 300. Positions 368-399 (ACTSTHLSQSSNLSLPSTQSLNIKSEPVSPPR) are transcription repressor. Polar residues predominate over residues 375-390 (SQSSNLSLPSTQSLNI). A disordered region spans residues 375-473 (SQSSNLSLPS…RMRLSEGWAT (99 aa)). Lys-391 is covalently cross-linked (Glycyl lysine isopeptide (Lys-Gly) (interchain with G-Cter in SUMO)). Residue Ser-396 is modified to Phosphoserine; by CDK5. Position 419 is a phosphoserine; by MAPK7 (Ser-419). Over residues 419-432 (SPVDSLSSCSSSYD) the composition is skewed to low complexity. Positions 433-443 (GSDREDHRNEF) are enriched in basic and acidic residues. At Ser-445 the chain carries Phosphoserine.

The protein belongs to the MEF2 family. Forms a complex with class II HDACs in undifferentiating cells. On myogenic differentiation, HDACs are released into the cytoplasm allowing MEF2s to interact with other proteins for activation. Interacts with EP300 in differentiating cells; the interaction acetylates MEF2C leading to increased DNA binding and activation. Interacts with HDAC7 and CARM1. Interacts with HDAC4 and HDAC9; the interaction with HDACs represses transcriptional activity. Interacts with LPIN1. Interacts with MYOCD. Interacts with AKAP13. Interacts with FOXK1; the interaction inhibits MEF2C transactivation activity. Interacts (via N-terminus) with HABP4; this interaction decreases DNA-binding activity of MEF2C in myocardial cells in response to mechanical stress. Interacts with JPH2; interaction specifically takes place with the Junctophilin-2 N-terminal fragment cleavage product of JPH2. Interacts (via MADS box) with SOX18. Interacts with PHF7; the interaction promotes MEF2C binding to its transcription targets. In terms of processing, phosphorylation on Ser-59 enhances DNA binding activity. Phosphorylation on Ser-396 is required for Lys-391 sumoylation and inhibits transcriptional activity. Acetylated by p300 on several sites in diffentiating myocytes. Acetylation on Lys-4 increases DNA binding and transactivation. Post-translationally, sumoylated on Lys-391 with SUMO2 but not by SUMO1 represses transcriptional activity. In terms of processing, proteolytically cleaved in cerebellar granule neurons, probably by caspase 7, following neurotoxicity. Preferentially cleaves the CDK5-mediated hyperphosphorylated form which leads to neuron apoptosis and transcriptional inactivation. As to expression, expressed in brain and skeletal muscle.

It localises to the nucleus. The protein localises to the cytoplasm. The protein resides in the sarcoplasm. Functionally, transcription activator which binds specifically to the MEF2 element present in the regulatory regions of many muscle-specific genes. Controls cardiac morphogenesis and myogenesis, and is also involved in vascular development. Enhances transcriptional activation mediated by SOX18. Plays an essential role in hippocampal-dependent learning and memory by suppressing the number of excitatory synapses and thus regulating basal and evoked synaptic transmission. Crucial for normal neuronal development, distribution, and electrical activity in the neocortex. Necessary for proper development of megakaryocytes and platelets and for bone marrow B-lymphopoiesis. Required for B-cell survival and proliferation in response to BCR stimulation, efficient IgG1 antibody responses to T-cell-dependent antigens and for normal induction of germinal center B-cells. May also be involved in neurogenesis and in the development of cortical architecture. Isoforms that lack the repressor domain are more active than isoform 1. This is Myocyte-specific enhancer factor 2C from Homo sapiens (Human).